The primary structure comprises 391 residues: Multidrug resistance protein MdtL (391 aa).

Residues 1–3 (MSR) lie on the Cytoplasmic side of the membrane. A helical transmembrane segment spans residues 4–24 (FLICSFALVLLYPAGIDMYLV). The Periplasmic segment spans residues 25–41 (GLPRIAADLNASEAQLH). Residues 42–62 (IAFSVYLAGMAAAMLFAGKVA) traverse the membrane as a helical segment. The Cytoplasmic segment spans residues 63–68 (DRSGRK). Residues 69-89 (PVAIPGAALFIIASVFCSLAE) traverse the membrane as a helical segment. Residues 90 to 92 (TST) lie on the Periplasmic side of the membrane. Residues 93 to 113 (LFLAGRFLQGLGAGCCYVVAF) traverse the membrane as a helical segment. The Cytoplasmic segment spans residues 114–130 (AILRDTLDDRRRAKVLS). A helical membrane pass occupies residues 131 to 151 (LLNGITCIIPVLAPVLGHLIM). Over 152–157 (LKFPWQ) the chain is Periplasmic. Residues 158–178 (SLFWAMAMMGIAVLMLSLFIL) form a helical membrane-spanning segment. Over 179–202 (KETRPASPAASDKPRENSESLLNR) the chain is Cytoplasmic. A helical membrane pass occupies residues 203-222 (FFLSRVVITTLSVSVILTFV). Residues 223–244 (NTSPVLLMEIMGFERGEYATIM) lie on the Periplasmic side of the membrane. Residues 245-265 (ALTAGVSMTFSFSTPFALGIF) traverse the membrane as a helical segment. The Cytoplasmic portion of the chain corresponds to 266-268 (KPR). A helical transmembrane segment spans residues 269 to 289 (TLMITSQVLFLAAGITLAVSP). The Periplasmic segment spans residues 290–292 (SHA). The helical transmembrane segment at 293 to 313 (VSLFGITLICAGFSVGFGVAM) threads the bilayer. The Cytoplasmic portion of the chain corresponds to 314 to 330 (SQALGPFSLRAGVASST). Residues 331–351 (LGIAQVCGSSLWIWLAAVVGI) form a helical membrane-spanning segment. The Periplasmic segment spans residues 352–355 (GAWN). Residues 356 to 376 (MLIGILIACSIVSLLLIMFVA) traverse the membrane as a helical segment. Over 377–391 (PGRPVAAHEEIHHHA) the chain is Cytoplasmic.

Belongs to the major facilitator superfamily. DHA1 family. MdtL (TC 2.A.1.2.22) subfamily.

The protein resides in the cell inner membrane. This Shigella flexneri protein is Multidrug resistance protein MdtL (mdtL).